The chain runs to 360 residues: 45 kDa calcium-binding protein (360 aa).

A signal peptide spans M1 to A29. N33 is a glycosylation site (N-linked (GlcNAc...) asparagine). 5 EF-hand domains span residues R96–E131, E135–F170, M231–N266, W276–Y311, and N312–S347. Ca(2+) is bound by residues D109, N111, D113, Q115, E120, D148, D150, D152, H154, E159, D244, D246, D248, K250, E255, D289, N291, D293, E300, D325, N327, D329, and E336.

Belongs to the CREC family.

It localises to the golgi apparatus lumen. Its function is as follows. May regulate calcium-dependent activities in the endoplasmic reticulum lumen or post-ER compartment. This Xenopus laevis (African clawed frog) protein is 45 kDa calcium-binding protein (sdf4).